The primary structure comprises 328 residues: Beta-ketoacyl-[acyl-carrier-protein] synthase III (328 aa).

Active-site residues include C122 and H255. The tract at residues 256-260 is ACP-binding; sequence QANVR. N285 is an active-site residue.

Belongs to the thiolase-like superfamily. FabH family. In terms of assembly, homodimer.

The protein resides in the cytoplasm. The catalysed reaction is malonyl-[ACP] + acetyl-CoA + H(+) = 3-oxobutanoyl-[ACP] + CO2 + CoA. It functions in the pathway lipid metabolism; fatty acid biosynthesis. In terms of biological role, catalyzes the condensation reaction of fatty acid synthesis by the addition to an acyl acceptor of two carbons from malonyl-ACP. Catalyzes the first condensation reaction which initiates fatty acid synthesis and may therefore play a role in governing the total rate of fatty acid production. Possesses both acetoacetyl-ACP synthase and acetyl transacylase activities. Its substrate specificity determines the biosynthesis of branched-chain and/or straight-chain of fatty acids. The polypeptide is Beta-ketoacyl-[acyl-carrier-protein] synthase III (Bordetella avium (strain 197N)).